The following is a 1073-amino-acid chain: Pleckstrin homology domain-containing family G member 5 (1073 aa).

5 disordered regions span residues 1–28 (MGTGPGVSGRRAAARPSSELPSPDSQLL), 91–135 (VSTR…ARRR), 217–261 (PGDE…ESSL), 278–309 (GEAGIPGHEPPAPSSCSLPVGSSGGTSSGINE), and 367–388 (SWEEEEEDDEEDEESSGLRLED). Basic and acidic residues-rich tracts occupy residues 217 to 231 (PGDEGKVEQGVKDSK) and 249 to 260 (ERVDPQSRRESS). Over residues 367 to 381 (SWEEEEEDDEEDEES) the composition is skewed to acidic residues. Positions 406–598 (HQQEAVWELL…ERFIHHVNTC (193 aa)) constitute a DH domain. The region spanning 654–754 (QLLLEGSLRM…WVDTIYNAQN (101 aa)) is the PH domain. 3 disordered regions span residues 762–818 (QLSA…TSDG), 833–873 (TLSS…GPVD), and 899–925 (PVVEPAPVPQTPSPQPSPRLRRRTPVQ). Residues 777–790 (LEEEEDEQEEEGEE) are compositionally biased toward acidic residues. Composition is skewed to polar residues over residues 791-809 (SGTSAASSPTILRKSSNSL) and 844-864 (VSSQSDESSLSNTASSVTPTS). At Thr793 the chain carries Phosphothreonine. The residue at position 798 (Ser798) is a Phosphoserine. Residues 900 to 915 (VVEPAPVPQTPSPQPS) are compositionally biased toward pro residues. At Thr909 the chain carries Phosphothreonine. Phosphoserine occurs at positions 911, 936, and 941. The tract at residues 993-1046 (MCDPCHGPQLSESENRPSHMTGGPADSARRRCREMPSGTMSRVQSEPPSGVSAQ) is disordered. Residues 1030 to 1039 (GTMSRVQSEP) are compositionally biased toward polar residues.

As to quaternary structure, interacts with GIPC1/synectin and RHOA. As to expression, expressed in neurons and glial cells of the peripheral nervous system, with highest levels of expression in the brain and sciatic nerve endoneurium. Isoform 2 is expressed at detectable levels only in malignant cells.

The protein localises to the cytoplasm. It localises to the perinuclear region. It is found in the cell membrane. The protein resides in the cell junction. Its subcellular location is the cell projection. The protein localises to the lamellipodium. In terms of biological role, functions as a guanine exchange factor (GEF) for RAB26 and thus regulates autophagy of synaptic vesicles in axon terminal of motoneurons. Involved in the control of neuronal cell differentiation. Plays a role in angiogenesis through regulation of endothelial cells chemotaxis. Also affects the migration, adhesion, and matrix/bone degradation in macrophages and osteoclasts. In Mus musculus (Mouse), this protein is Pleckstrin homology domain-containing family G member 5 (Plekhg5).